Consider the following 673-residue polypeptide: G-protein-signaling modulator 1 (673 aa).

The segment at 1 to 507 (MASPAPPVAE…DLLSKFQSSR (507 aa)) is mediates association with membranes. TPR repeat units lie at residues 28–61 (CLELALEGERLCKAGDFKAGVAFFEAAVQVGTED), 66–99 (SAIYSQLGNAYFYLKEYARALQFHKHDLLLARTI), 106–139 (AKASGNLGNTLKVLGRFDEAIVCCQRHLDIAQEQ), 146–178 (ARALYNIGNVYHAKGKQLSWNAAQDPGHLPPDV), 180–199 (ETLHRASEFYERNLSLVKEL), 206–239 (GRAYGNLGNTHYLLGNFTEATTFHKERLAIAKEF), 246–279 (RRAYSNLGNAHIFLGRFDVAAEHYKKTLQLSRQL), 286–319 (AQACYSLGNTYTLLQDYERAAEYHLRHLVIAQEL), and 326–359 (GRACWSLGNAYVSMGSPAQALTFAKKHLQISQEI). The segment at 361-485 (DRNGELTARM…VRVQVPRTGI (125 aa)) is interaction with STK11/LKB1. A Phosphoserine modification is found at serine 410. The residue at position 418 (arginine 418) is an Omega-N-methylarginine. Basic and acidic residues predominate over residues 420–439 (PLDREQNGETHHTGDWRGPG). Residues 420–475 (PLDREQNGETHHTGDWRGPGRDSLPLPMRSRKYQEGPDAIERRPREGSHSPLDSAD) are disordered. Phosphoserine is present on residues serine 442, serine 467, serine 469, serine 490, and serine 491. Residues 451–467 (KYQEGPDAIERRPREGS) show a composition bias toward basic and acidic residues. The GoLoco 1 domain occupies 493–515 (EECFFDLLSKFQSSRMDDQRCPL). Residues 508–531 (MDDQRCPLEEGQAGAAEATAAPSV) are disordered. Positions 516-528 (EEGQAGAAEATAA) are enriched in low complexity. Residues serine 543 and serine 567 each carry the phosphoserine modification. 3 consecutive GoLoco domains span residues 546–568 (TEEFFDLIASSQSRRLDDQRASV), 594–616 (GDEFFNMLIKYQSSRIDDQRCPP), and 628–650 (DEDFFSLIQRVQAKRMDEQRVDL). The segment at 644–673 (DEQRVDLAGSPEQEASGLPDPQQQCPPGAS) is disordered. At serine 653 the chain carries Phosphoserine. The segment covering 664–673 (PQQQCPPGAS) has biased composition (polar residues).

It belongs to the GPSM family. Interacts with GNAI1 and GNAI2 preferentially in their GDP-bound state. May also interact with GNAO1. Interacts with INSC/inscuteable and FRMPD1. Interacts with GNAI3. Interacts with STK11/LKB1 and MACF1. Phosphorylation regulates interaction with G(i/o) alpha. Expressed in neural progenitor cells (at protein level).

It localises to the cytoplasm. The protein localises to the cytosol. Its subcellular location is the endoplasmic reticulum membrane. The protein resides in the golgi apparatus membrane. It is found in the cell membrane. Its function is as follows. Guanine nucleotide dissociation inhibitor (GDI) which functions as a receptor-independent activator of heterotrimeric G-protein signaling. Keeps G(i/o) alpha subunit in its GDP-bound form thus uncoupling heterotrimeric G-proteins signaling from G protein-coupled receptors. Controls spindle orientation and asymmetric cell fate of cerebral cortical progenitors. May also be involved in macroautophagy in intestinal cells. May play a role in drug addiction. The protein is G-protein-signaling modulator 1 (Gpsm1) of Mus musculus (Mouse).